Reading from the N-terminus, the 468-residue chain is Nicotinamide phosphoribosyltransferase (468 aa).

A diphosphate-binding site is contributed by R180. D203 lines the beta-nicotinamide D-ribonucleotide pocket. Diphosphate is bound by residues H229 and R293. H229 carries the post-translational modification Phosphohistidine; by autocatalysis. The beta-nicotinamide D-ribonucleotide site is built by D335 and R373.

The protein belongs to the NAPRTase family. Homodimer. The dimeric structure consists of two protomers arranged head to tail, with domain A on one protomer interacting with domain B on the other protomer. In terms of processing, phosphorylation at His-229 plays a crucial role in enhancing the substrate affinity and is important for maintaining enzymatic activity.

It carries out the reaction beta-nicotinamide D-ribonucleotide + diphosphate = 5-phospho-alpha-D-ribose 1-diphosphate + nicotinamide + H(+). Its pathway is cofactor biosynthesis; NAD(+) biosynthesis; nicotinamide D-ribonucleotide from 5-phospho-alpha-D-ribose 1-diphosphate and nicotinamide: step 1/1. ATP-dependent autophosphorylation plays a vital role in nicotinamide binding and enzyme activation. Activity is inhibited by FK866. Catalyzes the condensation of nicotinamide with 5-phosphoribosyl-1-pyrophosphate to yield nicotinamide mononucleotide, an intermediate in the biosynthesis of NAD. Plays an important role in the biosynthesis of NAD via the nicotinamide (NAM) salvage pathway. Is also capable of hydrolyzing ATP and shows ATP-dependent autophosphorylation activity. This chain is Nicotinamide phosphoribosyltransferase, found in Xanthomonas campestris pv. campestris (strain 8004).